Reading from the N-terminus, the 465-residue chain is Cysteine--tRNA ligase (465 aa).

Cys29 contacts Zn(2+). The short motif at 31 to 41 (PTVYNYIHIGN) is the 'HIGH' region element. Residues Cys209, His234, and Glu238 each contribute to the Zn(2+) site. The short motif at 266–270 (KMSKS) is the 'KMSKS' region element. Lys269 contacts ATP. Phosphoserine is present on Ser270.

The protein belongs to the class-I aminoacyl-tRNA synthetase family. As to quaternary structure, monomer. Zn(2+) is required as a cofactor.

The protein localises to the cytoplasm. It carries out the reaction tRNA(Cys) + L-cysteine + ATP = L-cysteinyl-tRNA(Cys) + AMP + diphosphate. The sequence is that of Cysteine--tRNA ligase from Bacillus cereus (strain AH187).